A 267-amino-acid polypeptide reads, in one-letter code: Probable aquaporin TIP3-2 (267 aa).

Met-1 is subject to N-acetylmethionine. An N-acetylalanine; in Probable aquaporin TIP3-2, N-terminally processed modification is found at Ala-2. The Cytoplasmic segment spans residues 2–26 (ATSARRAYGFGRADEATHPDSIRAT). Residues 27–47 (LAEFLSTFVFVFAGEGSILAL) traverse the membrane as a helical segment. Topologically, residues 48–66 (DKLYWDTAAHTGTNTPGGL) are vacuolar. The helical transmembrane segment at 67–87 (VLVALAHALALFAAVSAAINV) threads the bilayer. The Cytoplasmic segment spans residues 88–110 (SGGHVNPAVTFAALIGGRISVIR). An NPA 1 motif is present at residues 93–95 (NPA). Residues 111-131 (AIYYWVAQLIGAILACLLLRL) traverse the membrane as a helical segment. Topologically, residues 132 to 151 (ATNGLRPVGFHVASGVSELH) are vacuolar. A helical transmembrane segment spans residues 152–172 (GLLMEIILTFALVYVVYSTAI). Over 173–178 (DPKRGS) the chain is Cytoplasmic. The chain crosses the membrane as a helical span at residues 179 to 199 (IGIIAPLAIGLIVGANILVGG). Residues 200–226 (PFDGASMNPARAFGPALVGWRWSNHWI) lie on the Vacuolar side of the membrane. An NPA 2 motif is present at residues 207-209 (NPA). Residues 227-247 (YWVGPFIGGALAALIYEYMII) form a helical membrane-spanning segment. The Cytoplasmic portion of the chain corresponds to 248–267 (PSVNEPPHHSTHQPLAPEDY).

The protein belongs to the MIP/aquaporin (TC 1.A.8) family. TIP (TC 1.A.8.10) subfamily. In terms of tissue distribution, predominantly expressed in developing seeds. Also expressed in rosette leaves.

Its subcellular location is the vacuole membrane. Functionally, aquaporins facilitate the transport of water and small neutral solutes across cell membranes. This Arabidopsis thaliana (Mouse-ear cress) protein is Probable aquaporin TIP3-2 (TIP3-2).